The following is a 161-amino-acid chain: Cyclic pyranopterin monophosphate synthase (161 aa).

Residues 75 to 77 (LCH) and 113 to 114 (ME) each bind substrate. Residue Asp128 is part of the active site.

It belongs to the MoaC family. In terms of assembly, homohexamer; trimer of dimers.

The enzyme catalyses (8S)-3',8-cyclo-7,8-dihydroguanosine 5'-triphosphate = cyclic pyranopterin phosphate + diphosphate. It participates in cofactor biosynthesis; molybdopterin biosynthesis. Functionally, catalyzes the conversion of (8S)-3',8-cyclo-7,8-dihydroguanosine 5'-triphosphate to cyclic pyranopterin monophosphate (cPMP). This Methylobacillus flagellatus (strain ATCC 51484 / DSM 6875 / VKM B-1610 / KT) protein is Cyclic pyranopterin monophosphate synthase.